We begin with the raw amino-acid sequence, 126 residues long: Ribosome-binding factor A (126 aa).

Belongs to the RbfA family. In terms of assembly, monomer. Binds 30S ribosomal subunits, but not 50S ribosomal subunits or 70S ribosomes.

The protein localises to the cytoplasm. In terms of biological role, one of several proteins that assist in the late maturation steps of the functional core of the 30S ribosomal subunit. Associates with free 30S ribosomal subunits (but not with 30S subunits that are part of 70S ribosomes or polysomes). Required for efficient processing of 16S rRNA. May interact with the 5'-terminal helix region of 16S rRNA. The sequence is that of Ribosome-binding factor A from Nitrosospira multiformis (strain ATCC 25196 / NCIMB 11849 / C 71).